Here is a 760-residue protein sequence, read N- to C-terminus: Catalase-peroxidase (760 aa).

Positions 1-22 are disordered; that stretch reads MSQGECPVKKVPNVAGSGTRNT. The segment at residues 93 to 242 is a cross-link (tryptophyl-tyrosyl-methioninium (Trp-Tyr) (with M-268)); it reads WHSAGTYRVT…LAAAHMGLIY (150 aa). The Proton acceptor role is filled by histidine 94. Positions 206–226 are disordered; the sequence is KGEGIMDGDQHKTDKSEPHTS. Basic and acidic residues predominate over residues 213 to 226; sequence GDQHKTDKSEPHTS. A cross-link (tryptophyl-tyrosyl-methioninium (Tyr-Met) (with W-93)) is located at residues 242–268; that stretch reads YVNPEGPEGIPDPVAAAHDIRTTFGRM. Residue histidine 283 coordinates heme b.

It belongs to the peroxidase family. Peroxidase/catalase subfamily. Homodimer or homotetramer. The cofactor is heme b. Formation of the three residue Trp-Tyr-Met cross-link is important for the catalase, but not the peroxidase activity of the enzyme.

The protein resides in the cytoplasm. The enzyme catalyses H2O2 + AH2 = A + 2 H2O. It carries out the reaction 2 H2O2 = O2 + 2 H2O. Functionally, bifunctional enzyme with both catalase and broad-spectrum peroxidase activity. In Pyrenophora tritici-repentis (strain Pt-1C-BFP) (Wheat tan spot fungus), this protein is Catalase-peroxidase.